A 642-amino-acid polypeptide reads, in one-letter code: Threonine--tRNA ligase (642 aa).

A TGS domain is found at 1-61 (MPVITLPDGS…ENDAQLSIIT (61 aa)). The catalytic stretch occupies residues 243-534 (DHRKIGKQLD…LTEEFAGFFP (292 aa)). Zn(2+)-binding residues include Cys334, His385, and His511.

Belongs to the class-II aminoacyl-tRNA synthetase family. In terms of assembly, homodimer. Requires Zn(2+) as cofactor.

The protein localises to the cytoplasm. The enzyme catalyses tRNA(Thr) + L-threonine + ATP = L-threonyl-tRNA(Thr) + AMP + diphosphate + H(+). Its function is as follows. Catalyzes the attachment of threonine to tRNA(Thr) in a two-step reaction: L-threonine is first activated by ATP to form Thr-AMP and then transferred to the acceptor end of tRNA(Thr). Also edits incorrectly charged L-seryl-tRNA(Thr). The sequence is that of Threonine--tRNA ligase from Enterobacter sp. (strain 638).